Reading from the N-terminus, the 37-residue chain is Mau operon transcriptional activator (37 aa).

It belongs to the LysR transcriptional regulatory family.

Transcriptional activator of the mau genes involved in methylamine metabolism. The polypeptide is Mau operon transcriptional activator (mauR) (Paracoccus versutus (Thiobacillus versutus)).